The primary structure comprises 363 residues: Peptide chain release factor 1 (363 aa).

Position 236 is an N5-methylglutamine (Gln236). The segment at 286–305 (KKEMERSTMRKSQIGSGDRS) is disordered.

The protein belongs to the prokaryotic/mitochondrial release factor family. Methylated by PrmC. Methylation increases the termination efficiency of RF1.

The protein localises to the cytoplasm. Functionally, peptide chain release factor 1 directs the termination of translation in response to the peptide chain termination codons UAG and UAA. The chain is Peptide chain release factor 1 from Wolbachia pipientis subsp. Culex pipiens (strain wPip).